A 1294-amino-acid polypeptide reads, in one-letter code: Voltage-gated inwardly rectifying potassium channel KCNH2 (1294 aa).

Over 1 to 377 the chain is Cytoplasmic; sequence RKFIIANARV…RIHRWTILHY (377 aa). Residues 15–44 form the PAS domain; the sequence is VIYCNDGFCELCGYSRAEVMQRPCTCDFLH. The 53-residue stretch at 66–118 folds into the PAC domain; that stretch reads RKVEIAFYRKDGSCFLCLVDVVPVKNEDGAVIMFILNFEVVMEKDMVGSPARD. A disordered region spans residues 207-258; that stretch reads LVAPGSPPSSVPGPPHTSPRAHSLNPDASGSSCSLARTRSRESCASVRRASS. Over residues 211–223 the composition is skewed to pro residues; the sequence is GSPPSSVPGPPHT. Phosphoserine is present on residues serine 212 and serine 216. Polar residues predominate over residues 232 to 243; the sequence is PDASGSSCSLAR. A phosphoserine mark is found at serine 257, serine 258, serine 294, and serine 325. Residues 378–398 traverse the membrane as a helical segment; the sequence is SPFKAVWDWLILLLVIYTAVF. Residues 399-424 are Extracellular-facing; sequence TPYSAAFLLKEPEEDAQTADCGYACQ. The helical transmembrane segment at 425–445 threads the bilayer; sequence PLAVVDLIVDIMFIVDILINF. Topologically, residues 446-469 are cytoplasmic; the sequence is RTTYVNANEEVVSHPGRIAVHYFK. The chain crosses the membrane as a helical span at residues 470–490; sequence GWFLIDMVAAIPFDLLIFGSG. Over 491 to 494 the chain is Extracellular; it reads SEEL. The helical; Voltage-sensor transmembrane segment at 495–515 threads the bilayer; the sequence is IGLLKTARLLRLVRVARKLDR. At 516-521 the chain is on the cytoplasmic side; that stretch reads YSEYGA. Residues 522–542 traverse the membrane as a helical segment; it reads AVLFLLMCTFALIAHWLACIW. The Extracellular portion of the chain corresponds to 543–585; that stretch reads YAIGNMEQPDMNSRIGWLHNLGDQIGKPYNSSGLGGPSIKDKY. The pore-forming intramembrane region spans 586–606; sequence VTALYFTFSSLTSVGFGNVSP. Residues 598–603 carry the Selectivity filter motif; it reads SVGFGN. The Extracellular portion of the chain corresponds to 607–612; the sequence is NTNSEK. Residues 613-633 form a helical membrane-spanning segment; the sequence is IFSICVMLIGSLMYASIFGNV. Topologically, residues 634 to 1294 are cytoplasmic; it reads SAIIQRLYSG…IAHWLACIWY (661 aa). The cNMP-binding domain stretch occupies residues 716 to 816; it reads PFRGATKGCL…IHRDDLLEVL (101 aa). A disordered region spans residues 844-956; the sequence is GSPGSTELEG…LTEDGDKSDT (113 aa). Phosphoserine occurs at positions 845 and 848. Basic residues predominate over residues 857-866; sequence RQRRRKLSFR. Residues 902-913 are compositionally biased toward low complexity; it reads GDSPSSGPSSPE. At arginine 987 the chain carries Omega-N-methylarginine. Positions 1008–1035 form a coiled coil; that stretch reads RGDVESRLDALQRQLNRLETRLSADMAT. Serine 1110 carries the post-translational modification Phosphoserine.

Belongs to the potassium channel family. H (Eag) (TC 1.A.1.20) subfamily. Kv11.1/KCNH2 sub-subfamily. The potassium channel is probably composed of a homo- or heterotetrameric complex of pore-forming alpha subunits that can associate with modulating beta subunits. Interacts with DNAJB12 and DNAJB14; chaperones DNAJB12 and DNAJB14 promote tetramerization. Heteromultimer with KCNH6/ERG2 and KCNH7/ERG3. Interacts with ALG10B. Forms a stable complex with KCNE1 or KCNE2, and that this heteromultimerization regulates Inward rectifier potassium channel activity. Interacts with CANX. The core-glycosylated, but not the fully glycosylated form interacts with RNF207. Interacts with NDFIP1 and NDFIP2; this interaction decreases the cell membrane expression by targeting KCNH2, through interaction with NEDD4L, for the degradation through the multivesicular bodies (MVBs)-lysosomal pathway. In terms of processing, phosphorylated on serine and threonine residues. Phosphorylation by PKA inhibits ion conduction. Highly expressed in heart and brain.

The protein localises to the cell membrane. It catalyses the reaction K(+)(in) = K(+)(out). In terms of biological role, pore-forming (alpha) subunit of voltage-gated inwardly rectifying potassium channel. Characterized by unusual gating kinetics by producing relatively small outward currents during membrane depolarization and large inward currents during subsequent repolarization which reflect a rapid inactivation during depolarization and quick recovery from inactivation but slow deactivation (closing) during repolarization. Channel properties are modulated by cAMP and subunit assembly. Forms a stable complex with KCNE1 or KCNE2, and that this heteromultimerization regulates inward rectifier potassium channel activity. The protein is Voltage-gated inwardly rectifying potassium channel KCNH2 of Cavia porcellus (Guinea pig).